A 256-amino-acid chain; its full sequence is Large ribosomal subunit protein uL2 (256 aa).

The segment at 208–230 (EHPHGGGNHQHIGKASTVKRGTS) is disordered.

Belongs to the universal ribosomal protein uL2 family. As to expression, in larvae tissues examined: gut, brain imaginal disk, salivary glands, fat body, muscles, epidermis and trachaea.

It is found in the cytoplasm. This Drosophila melanogaster (Fruit fly) protein is Large ribosomal subunit protein uL2 (RpL8).